A 116-amino-acid polypeptide reads, in one-letter code: MNLITTIITITITLSAVLATISFWLPQISPDAEKLSPYECGFDPLGSARLPFSLRFFLIAILFLLFDLEIALLLPLPWGDQLDTPTLTLIWSTAVLALLTLGLIYEWTQGGLEWAE.

Transmembrane regions (helical) follow at residues 3 to 23 (LITTIITITITLSAVLATISF), 56 to 76 (FFLIAILFLLFDLEIALLLPL), and 87 to 107 (LTLIWSTAVLALLTLGLIYEW).

This sequence belongs to the complex I subunit 3 family.

It localises to the mitochondrion membrane. The enzyme catalyses a ubiquinone + NADH + 5 H(+)(in) = a ubiquinol + NAD(+) + 4 H(+)(out). Functionally, core subunit of the mitochondrial membrane respiratory chain NADH dehydrogenase (Complex I) that is believed to belong to the minimal assembly required for catalysis. Complex I functions in the transfer of electrons from NADH to the respiratory chain. The immediate electron acceptor for the enzyme is believed to be ubiquinone. The chain is NADH-ubiquinone oxidoreductase chain 3 (MT-ND3) from Oncorhynchus tshawytscha (Chinook salmon).